Reading from the N-terminus, the 254-residue chain is MAPSPAEFSDQQQPAPHRTVQPPGVGYIPTDDERRVFRECNEESFWYRSLPISAVSMIVTQGLISRGILTTSSRFGSLPKVAFAGLCGYLAGKVSYMKTCQEKFKRLENSPLGEALRQGYRNIPTQYPSGTSEFSDVNPKTASPADGFASNVVEPPSSVYSSHHNSTSDTVPFSTSLGESSPSGISDNIAPEPAALLEDTPKRKPMTYDELRSRNRETYEMAVTQRADAPVRSSLDRAARKDVKTNKYGDVWEE.

2 disordered regions span residues 1–28 and 124–254; these read MAPS…VGYI and PTQY…VWEE. The OCIA domain occupies 1 to 114; it reads MAPSPAEFSD…KRLENSPLGE (114 aa). The segment covering 124–141 has biased composition (polar residues); that stretch reads PTQYPSGTSEFSDVNPKT. The segment covering 157–168 has biased composition (low complexity); the sequence is SSVYSSHHNSTS. Over residues 169 to 186 the composition is skewed to polar residues; the sequence is DTVPFSTSLGESSPSGIS. Basic and acidic residues-rich tracts occupy residues 199 to 219 and 234 to 247; these read DTPK…RETY and SLDR…KTNK.

Belongs to the OCIAD1 family.

It localises to the endosome. This is OCIA domain-containing protein 1 (ociad1) from Xenopus tropicalis (Western clawed frog).